Here is a 408-residue protein sequence, read N- to C-terminus: Peptidase T (408 aa).

Histidine 78 provides a ligand contact to Zn(2+). Aspartate 80 is an active-site residue. Aspartate 140 contacts Zn(2+). Glutamate 173 acts as the Proton acceptor in catalysis. Zn(2+) contacts are provided by glutamate 174, aspartate 196, and histidine 379.

It belongs to the peptidase M20B family. Zn(2+) is required as a cofactor.

Its subcellular location is the cytoplasm. It carries out the reaction Release of the N-terminal residue from a tripeptide.. In terms of biological role, cleaves the N-terminal amino acid of tripeptides. This Escherichia fergusonii (strain ATCC 35469 / DSM 13698 / CCUG 18766 / IAM 14443 / JCM 21226 / LMG 7866 / NBRC 102419 / NCTC 12128 / CDC 0568-73) protein is Peptidase T.